We begin with the raw amino-acid sequence, 270 residues long: Putative phosphoenolpyruvate synthase regulatory protein (270 aa).

ADP is bound at residue 150–157 (GVSRCGKT).

Belongs to the pyruvate, phosphate/water dikinase regulatory protein family. PSRP subfamily.

It carries out the reaction [pyruvate, water dikinase] + ADP = [pyruvate, water dikinase]-phosphate + AMP + H(+). The enzyme catalyses [pyruvate, water dikinase]-phosphate + phosphate + H(+) = [pyruvate, water dikinase] + diphosphate. Bifunctional serine/threonine kinase and phosphorylase involved in the regulation of the phosphoenolpyruvate synthase (PEPS) by catalyzing its phosphorylation/dephosphorylation. The sequence is that of Putative phosphoenolpyruvate synthase regulatory protein from Shewanella putrefaciens (strain CN-32 / ATCC BAA-453).